The primary structure comprises 171 residues: Crossover junction endodeoxyribonuclease RuvC (171 aa).

Catalysis depends on residues Asp7, Glu74, and Asp147. Asp7, Glu74, and Asp147 together coordinate Mg(2+).

The protein belongs to the RuvC family. Homodimer which binds Holliday junction (HJ) DNA. The HJ becomes 2-fold symmetrical on binding to RuvC with unstacked arms; it has a different conformation from HJ DNA in complex with RuvA. In the full resolvosome a probable DNA-RuvA(4)-RuvB(12)-RuvC(2) complex forms which resolves the HJ. The cofactor is Mg(2+).

The protein localises to the cytoplasm. It catalyses the reaction Endonucleolytic cleavage at a junction such as a reciprocal single-stranded crossover between two homologous DNA duplexes (Holliday junction).. The RuvA-RuvB-RuvC complex processes Holliday junction (HJ) DNA during genetic recombination and DNA repair. Endonuclease that resolves HJ intermediates. Cleaves cruciform DNA by making single-stranded nicks across the HJ at symmetrical positions within the homologous arms, yielding a 5'-phosphate and a 3'-hydroxyl group; requires a central core of homology in the junction. The consensus cleavage sequence is 5'-(A/T)TT(C/G)-3'. Cleavage occurs on the 3'-side of the TT dinucleotide at the point of strand exchange. HJ branch migration catalyzed by RuvA-RuvB allows RuvC to scan DNA until it finds its consensus sequence, where it cleaves and resolves the cruciform DNA. In Acidobacterium capsulatum (strain ATCC 51196 / DSM 11244 / BCRC 80197 / JCM 7670 / NBRC 15755 / NCIMB 13165 / 161), this protein is Crossover junction endodeoxyribonuclease RuvC.